The following is a 1109-amino-acid chain: Cation channel sperm-associated auxiliary subunit beta (1109 aa).

Over 1-1055 (MESPLIYVML…QIYVDEVPLP (1055 aa)) the chain is Extracellular. A disulfide bridge links C35 with C60. N66, N90, and N118 each carry an N-linked (GlcNAc...) asparagine glycan. An intrachain disulfide couples C189 to C302. N321 carries an N-linked (GlcNAc...) asparagine glycan. A disulfide bridge links C330 with C343. The N-linked (GlcNAc...) asparagine glycan is linked to N672. Cystine bridges form between C720-C818, C831-C1039, C913-C922, and C924-C939. 2 N-linked (GlcNAc...) asparagine glycosylation sites follow: N915 and N923. N-linked (GlcNAc...) asparagine glycosylation is present at N1017. The helical transmembrane segment at 1056 to 1078 (FPGHALIAVATSVVLGVLIFIAF) threads the bilayer. Over 1079–1109 (VFQLRNIHPLKALKKSIRGNPGLTSSTTVSS) the chain is Cytoplasmic.

As to quaternary structure, component of the CatSper complex or CatSpermasome composed of the core pore-forming members CATSPER1, CATSPER2, CATSPER3 and CATSPER4 as well as auxiliary members CATSPERB, CATSPERG2, CATSPERD, CATSPERE, CATSPERZ, C2CD6/CATSPERT, SLCO6C1, TMEM249, TMEM262 and EFCAB9. HSPA1 may be an additional auxiliary complex member. The core complex members CATSPER1, CATSPER2, CATSPER3 and CATSPER4 form a heterotetrameric channel. The auxiliary CATSPERB, CATSPERG2, CATSPERD and CATSPERE subunits form a pavilion-like structure over the pore which stabilizes the complex through interactions with CATSPER4, CATSPER3, CATSPER1 and CATSPER2 respectively. SLCO6C1 interacts with CATSPERE and TMEM262/CATSPERH interacts with CATSPERB, further stabilizing the complex. C2CD6/CATSPERT interacts at least with CATSPERD and is required for targeting the CatSper complex in the flagellar membrane. Testis-specific. Specifically present in the principal piece of sperm tail (at protein level). Specifically expressed in the seminiferous tubules but not in the interstitial cells. Within the tubules, it is expressed in spermatocytes and spermatids, but not in spermatogonia.

Its subcellular location is the cell projection. It is found in the cilium. The protein localises to the flagellum membrane. In terms of biological role, auxiliary component of the CatSper complex, a complex involved in sperm cell hyperactivation. Sperm cell hyperactivation is needed for sperm motility which is essential late in the preparation of sperm for fertilization. This chain is Cation channel sperm-associated auxiliary subunit beta, found in Mus musculus (Mouse).